We begin with the raw amino-acid sequence, 369 residues long: Isocitrate dehydrogenase [NAD] subunit 2, mitochondrial (369 aa).

Residues 1–15 constitute a mitochondrion transit peptide; that stretch reads MLRNTFFRNTSRRFL. At Thr105 the chain carries Phosphothreonine. Positions 119, 129, and 150 each coordinate substrate. Phosphothreonine is present on Thr153. Substrate is bound at residue Asp237. Positions 237, 263, and 267 each coordinate Mg(2+). A phosphothreonine mark is found at Thr327 and Thr349.

It belongs to the isocitrate and isopropylmalate dehydrogenases family. As to quaternary structure, octamer of two non-identical subunits IDH1 and IDH2. Mg(2+) is required as a cofactor. It depends on Mn(2+) as a cofactor.

Its subcellular location is the mitochondrion matrix. The enzyme catalyses D-threo-isocitrate + NAD(+) = 2-oxoglutarate + CO2 + NADH. Its activity is regulated as follows. Allosterically regulated by several compounds including AMP, NAD(+), and citrate. Performs an essential role in the oxidative function of the citric acid cycle. Also binds RNA; specifically to the 5'-untranslated leaders of mitochondrial mRNAs. This Saccharomyces cerevisiae (strain ATCC 204508 / S288c) (Baker's yeast) protein is Isocitrate dehydrogenase [NAD] subunit 2, mitochondrial (IDH2).